The primary structure comprises 790 residues: Lysine biosynthesis regulatory protein LYS14 (790 aa).

2 disordered regions span residues Met-1–Glu-50 and Phe-72–Asn-157. A compositionally biased stretch (low complexity) spans Ser-35–Ser-47. 2 stretches are compositionally biased toward polar residues: residues Lys-75–Asp-113 and Thr-120–Val-142. Positions Cys-159 to Cys-186 form a DNA-binding region, zn(2)-C6 fungal-type. The interval Lys-195–Asn-258 is disordered. Residues Ala-222 to Arg-239 show a composition bias toward basic residues.

The protein resides in the nucleus. Its function is as follows. Activates the transcription of lysine biosynthesis genes. This activation is dependent on the inducer alpha-aminoadipate semialdehyde and repressed by lysine. This Saccharomyces cerevisiae (strain ATCC 204508 / S288c) (Baker's yeast) protein is Lysine biosynthesis regulatory protein LYS14 (LYS14).